Here is a 405-residue protein sequence, read N- to C-terminus: Potassium channel subfamily K member 13 (405 aa).

Topologically, residues 1-19 (MAGRGCSCSPGHLNEDNAR) are cytoplasmic. A helical transmembrane segment spans residues 20 to 40 (FLLLAGLILLYLLGGAAVFSA). Asn59 and Asn65 each carry an N-linked (GlcNAc...) asparagine glycan. An intramembrane region (pore-forming) is located at residues 95-115 (WDFTGAFYFVGTVVTTIGFGM). Thr110, Ile111, and Gly112 together coordinate K(+). A selectivity filter 1 region spans residues 110 to 115 (TIGFGM). A helical transmembrane segment spans residues 125 to 145 (VFLIFYGLIGCASTILFFNLF). Over 146 to 193 (LERLITVIAYVMRTCHHQQLRRRGTVARDNRKAPRKGEADSLAGWKPS) the chain is Cytoplasmic. A helical membrane pass occupies residues 194–214 (VYYVMLILCLASVAISCGASA). Residues 224–244 (YFDSVYFCFVASSTIGFGDLV) constitute an intramembrane region (pore-forming). K(+) is bound by residues Thr237, Ile238, Gly239, and Phe240. The interval 237–242 (TIGFGD) is selectivity filter 2. The helical transmembrane segment at 263 to 283 (FFILMGVCCIYSMFNVISILI) threads the bilayer. The Cytoplasmic segment spans residues 284 to 405 (KQTVNWILRK…NRLAETSGDR (122 aa)).

Belongs to the two pore domain potassium channel (TC 1.A.1.8) family. Homodimer. Heterodimer with KCNK12. In terms of tissue distribution, ubiquitous. In brain expression is rather low and restricted to the olfactory bulb and tubercle, to the ventromedial hypothalamic nucleus, lateral septal nucleus dorsal, lateral mammillary nucleus, lateral parabrachial nuclei, reticular nucleus and reunions nuclei.

The protein localises to the cell membrane. The enzyme catalyses K(+)(in) = K(+)(out). The channel currents are activated by arachidonic acid, inhibited by volatile anesthetic halothane, partially inhibited by Ba(2+) ions and only weakly inhibited by extracellular acidification to pH 6. K(+) channel that conducts outward rectifying tonic currents potentiated by purinergic signals. Homo- and heterodimerizes to form functional channels with distinct regulatory and gating properties. Contributes most of K(+) currents at the plasma membrane of resting microglia. Maintains a depolarized membrane potential required for proper ramified microglia morphology and phagocytosis, selectively mediating microglial pruning of presynaptic compartments at hippocampal excitatory synapses. Upon local release of ATP caused by neuronal injury or infection, it is potentiated by P2RY12 and P2RX7 receptor signaling and contributes to ATP-triggered K(+) efflux underlying microglial NLRP3 inflammasome assembly and IL1B release. This is Potassium channel subfamily K member 13 from Rattus norvegicus (Rat).